A 250-amino-acid chain; its full sequence is Ribosomal RNA small subunit methyltransferase J (250 aa).

S-adenosyl-L-methionine contacts are provided by residues 96–97 (RD) and aspartate 168.

Belongs to the methyltransferase superfamily. RsmJ family.

It localises to the cytoplasm. The catalysed reaction is guanosine(1516) in 16S rRNA + S-adenosyl-L-methionine = N(2)-methylguanosine(1516) in 16S rRNA + S-adenosyl-L-homocysteine + H(+). Specifically methylates the guanosine in position 1516 of 16S rRNA. The polypeptide is Ribosomal RNA small subunit methyltransferase J (Neisseria gonorrhoeae (strain ATCC 700825 / FA 1090)).